The sequence spans 570 residues: Mitogen-activated protein kinase 11 (570 aa).

Positions 26–317 constitute a Protein kinase domain; that stretch reads YEVLEVIGKG…AQEALADPYF (292 aa). Residues 32–40 and lysine 55 each bind ATP; that span reads IGKGSYGLV. The Proton acceptor role is filled by aspartate 152. Threonine 188 carries the post-translational modification Phosphothreonine. Residues 188–190 carry the TXY motif; it reads TDY. Phosphotyrosine is present on tyrosine 190.

Belongs to the protein kinase superfamily. CMGC Ser/Thr protein kinase family. MAP kinase subfamily. Dually phosphorylated on Thr-188 and Tyr-190, which activates the enzyme.

It catalyses the reaction L-seryl-[protein] + ATP = O-phospho-L-seryl-[protein] + ADP + H(+). The enzyme catalyses L-threonyl-[protein] + ATP = O-phospho-L-threonyl-[protein] + ADP + H(+). Activated by threonine and tyrosine phosphorylation. The chain is Mitogen-activated protein kinase 11 (MPK11) from Oryza sativa subsp. japonica (Rice).